A 233-amino-acid polypeptide reads, in one-letter code: Large ribosomal subunit protein uL1 (233 aa).

It belongs to the universal ribosomal protein uL1 family. As to quaternary structure, part of the 50S ribosomal subunit.

Binds directly to 23S rRNA. Forms the L1 stalk. Unlike the case in the Thermus thermophilus 70S ribosome, this protein is not seen to block the exit path of the E site tRNA. It is clear that the protein in the structure is flexible however, so this is probably due to its position in these crystals. Its function is as follows. Protein L1 is also a translational repressor protein, it controls the translation of the L11 operon by binding to its mRNA. This is Large ribosomal subunit protein uL1 (rplA) from Deinococcus radiodurans (strain ATCC 13939 / DSM 20539 / JCM 16871 / CCUG 27074 / LMG 4051 / NBRC 15346 / NCIMB 9279 / VKM B-1422 / R1).